Reading from the N-terminus, the 125-residue chain is Small ribosomal subunit protein uS12 (125 aa).

A 3-methylthioaspartic acid modification is found at Asp-89. The disordered stretch occupies residues 106 to 125 (GVKDRKQSRSKYGAKRPKKA). Positions 113–125 (SRSKYGAKRPKKA) are enriched in basic residues.

Belongs to the universal ribosomal protein uS12 family. As to quaternary structure, part of the 30S ribosomal subunit. Contacts proteins S8 and S17. May interact with IF1 in the 30S initiation complex.

With S4 and S5 plays an important role in translational accuracy. Functionally, interacts with and stabilizes bases of the 16S rRNA that are involved in tRNA selection in the A site and with the mRNA backbone. Located at the interface of the 30S and 50S subunits, it traverses the body of the 30S subunit contacting proteins on the other side and probably holding the rRNA structure together. The combined cluster of proteins S8, S12 and S17 appears to hold together the shoulder and platform of the 30S subunit. The sequence is that of Small ribosomal subunit protein uS12 from Variovorax paradoxus (strain S110).